We begin with the raw amino-acid sequence, 96 residues long: MPSQMEHAMETMMFTFHKFAGDKGYLTKEDLRVLMEKEFPGFLENQKDPLAVDKIMKDLDQCRDGKVGFQSFFSLIAGLTIACNDYFVVHMKQKGK.

Residues Lys-23 and Lys-28 each carry the N6-acetyllysine modification. At Lys-37 the chain carries N6-acetyllysine; alternate. Lys-37 participates in a covalent cross-link: Glycyl lysine isopeptide (Lys-Gly) (interchain with G-Cter in SUMO2); alternate. Residues Lys-54 and Lys-57 each carry the N6-acetyllysine modification. The segment at 60–71 is ancestral calcium site; it reads DQCRDGKVGFQS.

Belongs to the S-100 family. In terms of assembly, heterotetramer containing 2 light chains of S100A10/p11 and 2 heavy chains of ANXA2/p36. Interacts with SCN10A. Interacts with TASOR.

In terms of biological role, because S100A10 induces the dimerization of ANXA2/p36, it may function as a regulator of protein phosphorylation in that the ANXA2 monomer is the preferred target (in vitro) of tyrosine-specific kinase. In Sus scrofa (Pig), this protein is Protein S100-A10 (S100A10).